The sequence spans 428 residues: Probable RNase MJ4 (428 aa).

Positions 57, 59, 61, 62, 143, 165, and 397 each coordinate Zn(2+).

It belongs to the metallo-beta-lactamase superfamily. RNA-metabolizing metallo-beta-lactamase-like family. It depends on Zn(2+) as a cofactor.

Probably an RNase. The polypeptide is Probable RNase MJ4 (Methanocaldococcus jannaschii (strain ATCC 43067 / DSM 2661 / JAL-1 / JCM 10045 / NBRC 100440) (Methanococcus jannaschii)).